We begin with the raw amino-acid sequence, 162 residues long: Putative 4-hydroxy-4-methyl-2-oxoglutarate aldolase (162 aa).

Substrate-binding positions include 75–78 (GDML) and R97. D98 contacts a divalent metal cation.

The protein belongs to the class II aldolase/RraA-like family. As to quaternary structure, homotrimer. A divalent metal cation serves as cofactor.

The catalysed reaction is 4-hydroxy-4-methyl-2-oxoglutarate = 2 pyruvate. It carries out the reaction oxaloacetate + H(+) = pyruvate + CO2. Functionally, catalyzes the aldol cleavage of 4-hydroxy-4-methyl-2-oxoglutarate (HMG) into 2 molecules of pyruvate. Also contains a secondary oxaloacetate (OAA) decarboxylase activity due to the common pyruvate enolate transition state formed following C-C bond cleavage in the retro-aldol and decarboxylation reactions. In Pseudomonas paraeruginosa (strain DSM 24068 / PA7) (Pseudomonas aeruginosa (strain PA7)), this protein is Putative 4-hydroxy-4-methyl-2-oxoglutarate aldolase.